The following is a 200-amino-acid chain: Coiled-coil domain-containing protein 85B (200 aa).

Positions 57 to 84 (LQGHLLEIRELKVINQRLQEENQELRDL) form a coiled coil. Over residues 178-188 (DGSSSTGSVGS) the composition is skewed to low complexity. The tract at residues 178-200 (DGSSSTGSVGSPDQLHLVCSPDD) is disordered.

It belongs to the CCDC85 family.

It localises to the nucleus. The protein localises to the cytoplasm. The protein resides in the cytoskeleton. Its subcellular location is the microtubule organizing center. It is found in the centrosome. It localises to the cell junction. The protein localises to the adherens junction. Functions as a transcriptional repressor. May inhibit the activity of CTNNB1 in a TP53-dependent manner and thus regulate cell growth. May function in adipocyte differentiation, negatively regulating mitotic clonal expansion. Plays a role in cell-cell adhesion and epithelium development through its interaction with proteins of the beta-catenin family. This Danio rerio (Zebrafish) protein is Coiled-coil domain-containing protein 85B (ccdc85b).